A 322-amino-acid chain; its full sequence is tRNA U34 carboxymethyltransferase (322 aa).

Carboxy-S-adenosyl-L-methionine-binding positions include K90, W104, K109, G129, 151-153 (DPT), 179-180 (ME), M195, Y199, and R314.

This sequence belongs to the class I-like SAM-binding methyltransferase superfamily. CmoB family. Homotetramer.

It carries out the reaction carboxy-S-adenosyl-L-methionine + 5-hydroxyuridine(34) in tRNA = 5-carboxymethoxyuridine(34) in tRNA + S-adenosyl-L-homocysteine + H(+). Functionally, catalyzes carboxymethyl transfer from carboxy-S-adenosyl-L-methionine (Cx-SAM) to 5-hydroxyuridine (ho5U) to form 5-carboxymethoxyuridine (cmo5U) at position 34 in tRNAs. The chain is tRNA U34 carboxymethyltransferase from Alcanivorax borkumensis (strain ATCC 700651 / DSM 11573 / NCIMB 13689 / SK2).